A 238-amino-acid chain; its full sequence is MSSIALGVNIDHIATLRNARNVDYPCIIEVANIAVNNGADFITVHLREDRRHIMDDDVFRLKSSLKVPLNLEIAATDEMLSIAIEVKPKCVCLVPEKRQELTTEGGLDVGSIFSYLVSFIEKLHSYDIDVTLFIEPDISQIDLAKKLHANNVELHTGKYCNNATQNELSKIIKAAEHCHHQNITCHAGHGLNYQSAATIAKVPYISALNIGHFLICEAVLHGIGKSIYKMKQVIASTD.

Asn9 contributes to the 3-amino-2-oxopropyl phosphate binding site. Residue 11 to 12 coordinates 1-deoxy-D-xylulose 5-phosphate; that stretch reads DH. Residue Arg20 coordinates 3-amino-2-oxopropyl phosphate. His45 functions as the Proton acceptor in the catalytic mechanism. Positions 47 and 52 each coordinate 1-deoxy-D-xylulose 5-phosphate. The active-site Proton acceptor is the Glu72. Thr102 provides a ligand contact to 1-deoxy-D-xylulose 5-phosphate. The Proton donor role is filled by His189. Residues Gly190 and 211-212 contribute to the 3-amino-2-oxopropyl phosphate site; that span reads GH.

Belongs to the PNP synthase family. In terms of assembly, homooctamer; tetramer of dimers.

Its subcellular location is the cytoplasm. The catalysed reaction is 3-amino-2-oxopropyl phosphate + 1-deoxy-D-xylulose 5-phosphate = pyridoxine 5'-phosphate + phosphate + 2 H2O + H(+). The protein operates within cofactor biosynthesis; pyridoxine 5'-phosphate biosynthesis; pyridoxine 5'-phosphate from D-erythrose 4-phosphate: step 5/5. In terms of biological role, catalyzes the complicated ring closure reaction between the two acyclic compounds 1-deoxy-D-xylulose-5-phosphate (DXP) and 3-amino-2-oxopropyl phosphate (1-amino-acetone-3-phosphate or AAP) to form pyridoxine 5'-phosphate (PNP) and inorganic phosphate. The protein is Pyridoxine 5'-phosphate synthase of Ehrlichia canis (strain Jake).